Reading from the N-terminus, the 431-residue chain is Tol-Pal system protein TolB (431 aa).

A signal peptide spans 1-24; that stretch reads MMKFLTRMLSAFAVLFFAISTAQA. The disordered stretch occupies residues 318–340; it reads QVYRMSSSGGAASPVGGRGSAQI. Over residues 323-332 the composition is skewed to low complexity; that stretch reads SSSGGAASPV.

It belongs to the TolB family. The Tol-Pal system is composed of five core proteins: the inner membrane proteins TolA, TolQ and TolR, the periplasmic protein TolB and the outer membrane protein Pal. They form a network linking the inner and outer membranes and the peptidoglycan layer.

Its subcellular location is the periplasm. In terms of biological role, part of the Tol-Pal system, which plays a role in outer membrane invagination during cell division and is important for maintaining outer membrane integrity. The protein is Tol-Pal system protein TolB of Mannheimia succiniciproducens (strain KCTC 0769BP / MBEL55E).